We begin with the raw amino-acid sequence, 1852 residues long: MEPPSPQDEGLRKKQPKKPVPEILPRPPRALFCLTLQNPLRKACISIVEWKPFETIILLTIFANCVALAVYLPMPEDDNNTLNLGLEKLEYFFLIVFSIEAAMKIIAYGFLFHQDAYLRSGWNVLDFIIVFLGVFTVILEQVNIIQTNTAPMSSKGAGLDVKALRAFRVLRPLRLVSGVPSLQVVLNSIFKAMLPLFHIALLVLFMVIIYAIIGLELFKGKMHKTCYFIGTDIVATVENEKPSPCARTGSGRPCTINGSECRGGWPGPNHGITHFDNFGFSMLTVYQCISMEGWTDVLYWVNDAIGNEWPWIYFVTLILLGSFFILNLVLGVLSGEFTKEREKAKSRGTFQKLREKQQLEEDLRGYMSWITQGEVMDVDDLREGKLSLDEGGSDTESLYEIEGLNKIIQFIRHWRQWNRVFRWKCHDLVKSKVFYWLVILIVALNTLSIASEHHNQPLWLTHLQDVANRVLLTLFTIEMLMKMYGLGLRQYFMSIFNRFDCFVVCSGILEILLVESGAMSPLGISVLRCIRLLRLFKITKYWTSLSNLVASLLNSIRSIASLLLLLFLFIIIFALLGMQLFGGRYDFEDTEVRRSNFDNFPQALISVFQVLTGEDWNSVMYNGIMAYGGPTYPGVLVCIYFIILFVCGNYILLNVFLAIAVDNLAEAESLTSAQKAKAEERKRRKMSKGLPDKSEEERATVTKKLEQKSKGEGIPTTAKLKIDEFESNVNEVKDPYPSADFPGDDEEDEPEIPVSPRPRPLAELQLKEKAVPIPEASSFFIFSPTNKIRVLCHRIVNATWFTNFILLFILLSSAALAAEDPIRADSMRNQILEYFDYVFTAVFTVEIVLKMTTYGAFLHKGSFCRNYFNILDLLVVAVSLISMGLESSAISVVKILRVLRVLRPLRAINRAKGLKHVVQCVFVAIRTIGNIVLVTTLLQFMFACIGVQLFKGKFYSCNDLSKMTEEECRGYYYIYKDGDPTQIELRPRQWIHNDFHFDNVLSAMMSLFTVSTFEGWPQLLYKAIDSNEEDTGPVYNNRVEMAIFFIIYIILIAFFMMNIFVGFVIVTFQEQGETEYKNCELDKNQRQCVQYALKARPLRCYIPKNPYQYQVWYVVTSSYFEYLMFALIMLNTICLGMQHYNQSEQMNHISDILNVAFTIIFTLEMVLKLIAFKPRGYFGDPWNVFDFLIVIGSIIDVILSEIDTFLASSGGLYCLGGGCGNVDPDESARISSAFFRLFRVMRLVKLLNRAEGVRTLLWTFIKSFQALPYVALLIVMLFFIYAVIGMQMFGKIAMVDGTQINRNNNFQTFPQAVLLLFRCATGEAWQEILLACSYGKLCDPESDYAPGEEHTCGTNFAYYYFISFYMLCAFLIINLFVAVIMDNFDYLTRDWSILGPHHLDEFKAIWAEYDPEAKGRIKHLDVVTLLRRIQPPLGFGKFCPHRVACKRLVGMNMPLNSDGTVTFNATLFALVRTALKIKTEGNFEQANEELRAIIKKIWKRTSMKLLDQVIPPIGDDEVTVGKFYATFLIQEHFRKFMKRQEEYYGYRPKKDTVQIQAGLRTIEEEAAPEIHRAISGDLTAEEELERAMVEAAMEEGIFRRTGGLFGQVDNFLERTNSLPPVMANQRPLQFAEIEMEELESPVFLEDFPQNPGTHPLARANTNNANANVAYGNSSHRNNPVFSSICYEREFLGEADMPVTREGPLSQPCRASGPHSRSHVDKLKRPMTQRGMPEGQVPPSPCQVTGAKAEHPVQKEGKGPTSRFLETPNSRNFEEHVPRNSAHRCTAPATAMLIQEALVRGGLDSLAADANFVMATGQALADACQMEPEEVEVAATELLKQESPEGGAVPWEP.

The interval 1–23 (MEPPSPQDEGLRKKQPKKPVPEI) is disordered. Residues 1–51 (MEPPSPQDEGLRKKQPKKPVPEILPRPPRALFCLTLQNPLRKACISIVEWK) are Cytoplasmic-facing. An I repeat occupies 38–337 (NPLRKACISI…LVLGVLSGEF (300 aa)). Residues 52–70 (PFETIILLTIFANCVALAV) form a helical membrane-spanning segment. At 71–85 (YLPMPEDDNNTLNLG) the chain is on the extracellular side. Residue Asn-79 is glycosylated (N-linked (GlcNAc...) asparagine). The chain crosses the membrane as a helical span at residues 86-106 (LEKLEYFFLIVFSIEAAMKII). The Cytoplasmic segment spans residues 107-115 (AYGFLFHQD). Residues 116–136 (AYLRSGWNVLDFIIVFLGVFT) form a helical membrane-spanning segment. Residues 137 to 160 (VILEQVNIIQTNTAPMSSKGAGLD) are Extracellular-facing. Residues 161–179 (VKALRAFRVLRPLRLVSGV) traverse the membrane as a helical segment. The Cytoplasmic segment spans residues 180 to 196 (PSLQVVLNSIFKAMLPL). Residues 197-218 (FHIALLVLFMVIIYAIIGLELF) traverse the membrane as a helical segment. Topologically, residues 219-279 (KGKMHKTCYF…HGITHFDNFG (61 aa)) are extracellular. Cystine bridges form between Cys-226–Cys-254 and Cys-245–Cys-261. N-linked (GlcNAc...) asparagine glycosylation occurs at Asn-257. Positions 280-301 (FSMLTVYQCISMEGWTDVLYWV) form an intramembrane region, pore-forming. Residues 290 to 293 (SMEG) carry the Selectivity filter of repeat I motif. Glu-292 serves as a coordination point for Ca(2+). Residues 302-309 (NDAIGNEW) are Extracellular-facing. The chain crosses the membrane as a helical span at residues 310–330 (PWIYFVTLILLGSFFILNLVL). Topologically, residues 331-432 (GVLSGEFTKE…WKCHDLVKSK (102 aa)) are cytoplasmic. The segment at 357 to 374 (QQLEEDLRGYMSWITQGE) is binding to the beta subunit. Phosphoserine is present on residues Ser-393 and Ser-397. The II repeat unit spans residues 418–664 (NRVFRWKCHD…VFLAIAVDNL (247 aa)). A helical membrane pass occupies residues 433-451 (VFYWLVILIVALNTLSIAS). At 452-462 (EHHNQPLWLTH) the chain is on the extracellular side. A helical membrane pass occupies residues 463 to 483 (LQDVANRVLLTLFTIEMLMKM). Residues 484–494 (YGLGLRQYFMS) lie on the Cytoplasmic side of the membrane. A helical membrane pass occupies residues 495–514 (IFNRFDCFVVCSGILEILLV). The Extracellular portion of the chain corresponds to 515–523 (ESGAMSPLG). Residues 524 to 542 (ISVLRCIRLLRLFKITKYW) form a helical membrane-spanning segment. The Cytoplasmic segment spans residues 543-561 (TSLSNLVASLLNSIRSIAS). Residues 562-581 (LLLLLFLFIIIFALLGMQLF) form a helical membrane-spanning segment. Over 582–601 (GGRYDFEDTEVRRSNFDNFP) the chain is Extracellular. The pore-forming intramembrane region spans 602–623 (QALISVFQVLTGEDWNSVMYNG). Positions 612-615 (TGED) match the Selectivity filter of repeat II motif. Glu-614 is a binding site for Ca(2+). Residues 624–633 (IMAYGGPTYP) are Extracellular-facing. A helical transmembrane segment spans residues 634–653 (GVLVCIYFIILFVCGNYILL). Topologically, residues 654 to 799 (NVFLAIAVDN…VLCHRIVNAT (146 aa)) are cytoplasmic. Disordered regions lie at residues 675 to 712 (KAKA…SKGE) and 731 to 757 (EVKD…VSPR). Phosphoserine; by PKA is present on Ser-687. A compositionally biased stretch (basic and acidic residues) spans 690–711 (LPDKSEEERATVTKKLEQKSKG). The span at 742 to 751 (PGDDEEDEPE) shows a compositional bias: acidic residues. One copy of the III repeat lies at 768 to 1068 (EKAVPIPEAS…IFVGFVIVTF (301 aa)). The helical transmembrane segment at 800 to 818 (WFTNFILLFILLSSAALAA) threads the bilayer. Over 819-830 (EDPIRADSMRNQ) the chain is Extracellular. Residues 831–850 (ILEYFDYVFTAVFTVEIVLK) traverse the membrane as a helical segment. Residues 851–866 (MTTYGAFLHKGSFCRN) lie on the Cytoplasmic side of the membrane. The helical transmembrane segment at 867–885 (YFNILDLLVVAVSLISMGL) threads the bilayer. The Extracellular portion of the chain corresponds to 886 to 892 (ESSAISV). Residues 893-911 (VKILRVLRVLRPLRAINRA) form a helical membrane-spanning segment. Residues 912–930 (KGLKHVVQCVFVAIRTIGN) lie on the Cytoplasmic side of the membrane. Residues 931 to 950 (IVLVTTLLQFMFACIGVQLF) form a helical membrane-spanning segment. Residues 951 to 1000 (KGKFYSCNDLSKMTEEECRGYYYIYKDGDPTQIELRPRQWIHNDFHFDNV) are Extracellular-facing. A disulfide bridge links Cys-957 with Cys-968. Positions 988–1077 (RQWIHNDFHF…FQEQGETEYK (90 aa)) are dihydropyridine binding. The segment at residues 1001-1021 (LSAMMSLFTVSTFEGWPQLLY) is an intramembrane region (pore-forming). The Selectivity filter of repeat III signature appears at 1012 to 1015 (TFEG). Glu-1014 provides a ligand contact to Ca(2+). Over 1022-1038 (KAIDSNEEDTGPVYNNR) the chain is Extracellular. A helical transmembrane segment spans residues 1039-1060 (VEMAIFFIIYIILIAFFMMNIF). Residues 1061–1118 (VGFVIVTFQEQGETEYKNCELDKNQRQCVQYALKARPLRCYIPKNPYQYQVWYVVTSS) are Cytoplasmic-facing. One copy of the IV repeat lies at 1105–1384 (NPYQYQVWYV…LFVAVIMDNF (280 aa)). Residues 1119–1140 (YFEYLMFALIMLNTICLGMQHY) traverse the membrane as a helical segment. Asn-1141 carries N-linked (GlcNAc...) asparagine glycosylation. Residues 1141 to 1148 (NQSEQMNH) are Extracellular-facing. The helical transmembrane segment at 1149-1170 (ISDILNVAFTIIFTLEMVLKLI) threads the bilayer. Residues 1171–1180 (AFKPRGYFGD) are Cytoplasmic-facing. Residues 1181–1200 (PWNVFDFLIVIGSIIDVILS) traverse the membrane as a helical segment. The Extracellular segment spans residues 1201-1231 (EIDTFLASSGGLYCLGGGCGNVDPDESARIS). A helical transmembrane segment spans residues 1232–1250 (SAFFRLFRVMRLVKLLNRA). At 1251-1268 (EGVRTLLWTFIKSFQALP) the chain is on the cytoplasmic side. A helical transmembrane segment spans residues 1269–1289 (YVALLIVMLFFIYAVIGMQMF). The Extracellular segment spans residues 1290-1311 (GKIAMVDGTQINRNNNFQTFPQ). Positions 1312 to 1330 (AVLLLFRCATGEAWQEILL) form an intramembrane region, pore-forming. The Selectivity filter of repeat IV motif lies at 1321-1324 (TGEA). The Extracellular portion of the chain corresponds to 1331–1356 (ACSYGKLCDPESDYAPGEEHTCGTNF). The segment at 1337–1403 (LCDPESDYAP…LGPHHLDEFK (67 aa)) is dihydropyridine binding. A disulfide bridge connects residues Cys-1338 and Cys-1352. Phenylalkylamine binding regions lie at residues 1349 to 1391 (EHTC…TRDW) and 1349 to 1392 (EHTC…RDWS). The helical transmembrane segment at 1357–1381 (AYYYFISFYMLCAFLIINLFVAVIM) threads the bilayer. At 1382-1852 (DNFDYLTRDW…PEGGAVPWEP (471 aa)) the chain is on the cytoplasmic side. The segment at 1522–1542 (KFYATFLIQEHFRKFMKRQEE) is interaction with calmodulin. Ser-1575 is modified (phosphoserine; by PKA and CAMK2). A Phosphothreonine modification is found at Thr-1579. At Ser-1617 the chain carries Phosphoserine; by PKA. Disordered regions lie at residues 1702–1721 (GPLS…HVDK) and 1727–1762 (TQRG…PTSR). Over residues 1747 to 1757 (KAEHPVQKEGK) the composition is skewed to basic and acidic residues.

The protein belongs to the calcium channel alpha-1 subunit (TC 1.A.1.11) family. CACNA1S subfamily. In terms of assembly, component of a calcium channel complex consisting of a pore-forming alpha subunit (CACNA1S) and the ancillary subunits CACNB1 or CACNB2, CACNG1 and CACNA2D1. The channel complex contains alpha, beta, gamma and delta subunits in a 1:1:1:1 ratio, i.e. it contains either CACNB1 or CACNB2. CACNA1S channel activity is modulated by the auxiliary subunits (CACNB1 or CACNB2, CACNG1 and CACNA2D1). Interacts with DYSF and JSRP1. Interacts with RYR1. Interacts with STAC, STAC2 and STAC3 (via their SH3 domains). Interacts with CALM. The alpha-1S subunit is found in two isoforms in the skeletal muscle: a minor form of 212 kDa containing the complete amino acid sequence, and a major form of 190 kDa derived from the full-length form by post-translational proteolysis close to Phe-1690. In terms of processing, phosphorylated. Phosphorylation by PKA activates the calcium channel. Both the minor and major forms are phosphorylated in vitro by PKA. Phosphorylation at Ser-1575 is involved in beta-adrenergic-mediated regulation of the channel.

Its subcellular location is the cell membrane. It is found in the sarcolemma. It localises to the T-tubule. It catalyses the reaction Ca(2+)(in) = Ca(2+)(out). With respect to regulation, channel activity is blocked by dihydropyridines (DHP), phenylalkylamines, and by benzothiazepines. Its function is as follows. Pore-forming, alpha-1S subunit of the voltage-gated calcium channel that gives rise to L-type calcium currents in skeletal muscle. Calcium channels containing the alpha-1S subunit play an important role in excitation-contraction coupling in skeletal muscle via their interaction with RYR1, which triggers Ca(2+) release from the sarcplasmic reticulum and ultimately results in muscle contraction. Long-lasting (L-type) calcium channels belong to the 'high-voltage activated' (HVA) group. This Mus musculus (Mouse) protein is Voltage-dependent L-type calcium channel subunit alpha-1S (Cacna1s).